Here is a 213-residue protein sequence, read N- to C-terminus: Methylthioribulose-1-phosphate dehydratase (213 aa).

Residues His97 and His99 each contribute to the Zn(2+) site.

It belongs to the aldolase class II family. MtnB subfamily. In terms of assembly, homotetramer. Zn(2+) serves as cofactor.

It catalyses the reaction 5-(methylsulfanyl)-D-ribulose 1-phosphate = 5-methylsulfanyl-2,3-dioxopentyl phosphate + H2O. It functions in the pathway amino-acid biosynthesis; L-methionine biosynthesis via salvage pathway; L-methionine from S-methyl-5-thio-alpha-D-ribose 1-phosphate: step 2/6. Catalyzes the dehydration of methylthioribulose-1-phosphate (MTRu-1-P) into 2,3-diketo-5-methylthiopentyl-1-phosphate (DK-MTP-1-P). The protein is Methylthioribulose-1-phosphate dehydratase of Geobacillus sp. (strain WCH70).